We begin with the raw amino-acid sequence, 111 residues long: Large ribosomal subunit protein eL31 (111 aa).

This sequence belongs to the eukaryotic ribosomal protein eL31 family.

The protein is Large ribosomal subunit protein eL31 (RPL31) of Encephalitozoon cuniculi (strain GB-M1) (Microsporidian parasite).